The following is a 135-amino-acid chain: Large ribosomal subunit protein bL17 (135 aa).

This sequence belongs to the bacterial ribosomal protein bL17 family. As to quaternary structure, part of the 50S ribosomal subunit. Contacts protein L32.

The chain is Large ribosomal subunit protein bL17 from Listeria innocua serovar 6a (strain ATCC BAA-680 / CLIP 11262).